A 415-amino-acid chain; its full sequence is uncharacterized protein (415 aa).

Disordered regions lie at residues 39 to 77 (FLPPSSNTTLQKESQEGSPPPTQSQEPLKPMENVSRPIH), 220 to 247 (AEDKETTSKGSNAKEESKNGLHPKHPLT), and 346 to 415 (VTLN…NGSK). Basic and acidic residues-rich tracts occupy residues 220-238 (AEDKETTSKGSNAKEESKN), 365-380 (DVNKDPKLNLCPDKHM), and 400-415 (SKTEKIYPEPRRNGSK).

This is an uncharacterized protein from Rattus norvegicus (Rat).